We begin with the raw amino-acid sequence, 86 residues long: Polcalcin Nic t 2 (86 aa).

2 consecutive EF-hand domains span residues 8–42 (QDIA…TLGS) and 43–78 (VTPE…NRGL). The Ca(2+) site is built by D21, N23, D25, Q27, E32, D56, N58, D60, and E67.

This is Polcalcin Nic t 2 (Nict2) from Nicotiana tabacum (Common tobacco).